The following is a 195-amino-acid chain: Probable DNA-directed RNA polymerase subunit delta (195 aa).

Positions 14–81 (FALVEIATAI…GNNEWALRAW (68 aa)) constitute an HTH HARE-type domain. Acidic residues-rich tracts occupy residues 120–172 (DDDV…DESI) and 181–195 (GGDDLDDLSDGDQEK). Residues 120–195 (DDDVIDYNDD…DDLSDGDQEK (76 aa)) are disordered.

Belongs to the RpoE family. As to quaternary structure, RNAP is composed of a core of 2 alpha, a beta and a beta' subunits. The core is associated with a delta subunit and one of several sigma factors.

Its function is as follows. Participates in both the initiation and recycling phases of transcription. In the presence of the delta subunit, RNAP displays an increased specificity of transcription, a decreased affinity for nucleic acids, and an increased efficiency of RNA synthesis because of enhanced recycling. In Leuconostoc mesenteroides subsp. mesenteroides (strain ATCC 8293 / DSM 20343 / BCRC 11652 / CCM 1803 / JCM 6124 / NCDO 523 / NBRC 100496 / NCIMB 8023 / NCTC 12954 / NRRL B-1118 / 37Y), this protein is Probable DNA-directed RNA polymerase subunit delta.